The sequence spans 645 residues: Fructose-1,6-bisphosphatase class 3 (645 aa).

It belongs to the FBPase class 3 family. Mn(2+) serves as cofactor.

It catalyses the reaction beta-D-fructose 1,6-bisphosphate + H2O = beta-D-fructose 6-phosphate + phosphate. The protein operates within carbohydrate biosynthesis; gluconeogenesis. The sequence is that of Fructose-1,6-bisphosphatase class 3 from Fusobacterium nucleatum subsp. nucleatum (strain ATCC 25586 / DSM 15643 / BCRC 10681 / CIP 101130 / JCM 8532 / KCTC 2640 / LMG 13131 / VPI 4355).